The chain runs to 66 residues: Large ribosomal subunit protein uL29 (66 aa).

The protein belongs to the universal ribosomal protein uL29 family.

The sequence is that of Large ribosomal subunit protein uL29 from Thermoplasma volcanium (strain ATCC 51530 / DSM 4299 / JCM 9571 / NBRC 15438 / GSS1).